Consider the following 288-residue polypeptide: Glucose-1-phosphate thymidylyltransferase (288 aa).

G8 contacts dTDP-alpha-D-glucose. DTTP-binding residues include G8, G11, T12, R13, K23, Q24, Q80, G85, and D108. DTDP-alpha-D-glucose contacts are provided by K23, Q24, Q80, G85, D108, N109, G143, E158, K159, V169, and D222. D108 is a binding site for Mg(2+). Residue D222 participates in Mg(2+) binding.

This sequence belongs to the glucose-1-phosphate thymidylyltransferase family. It depends on Mg(2+) as a cofactor.

It carries out the reaction dTTP + alpha-D-glucose 1-phosphate + H(+) = dTDP-alpha-D-glucose + diphosphate. The protein operates within carbohydrate biosynthesis; dTDP-L-rhamnose biosynthesis. Its function is as follows. Catalyzes the conversion of glucose-1-phosphate and dTTP to dTDP-glucose and pyrophosphate. Involved in the biosynthesis of the dTDP-L-rhamnose which is a component of the critical linker, D-N-acetylglucosamine-L-rhamnose disaccharide, which connects the galactan region of arabinogalactan to peptidoglycan via a phosphodiester linkage. This chain is Glucose-1-phosphate thymidylyltransferase (rmlA), found in Mycobacterium tuberculosis (strain CDC 1551 / Oshkosh).